A 498-amino-acid polypeptide reads, in one-letter code: MASDQHRPKPRLSLRSSTTIRYGSMSSEHPDGDPSTPQTTSISQRRSYIAVAVLCYINLLNYMDRYTIAGVLLRIQKFFFISDSTSGLLQTVFICSFMFLAPVFGYLGDRYDRKLIMIVGLVMWIVTTLGSSFVRKSHFWVLVATRALVGTGEASYSTIAPTIIGDLFAGSKRTLMISFFYIFIPVGSGLGYIIGATVADATGDWRWALRVSPALGGLGLLLLVFLIPNPPRGASDNGGANMETTSYTEDIKYLLKNRSFVWSSLGVTAMAFVTGALAFWTPTFLSRAQVTQGLKQPCKEEPCDSVDSYIFGAITVVTGVVGVFLGTCISKKLRDRVPNADPLICAVGMLSSSPCFFIAIVLASTSIPATYTFIAIGETLLSLNWAILADILLYVVVPNRRATAEALQIMVCHLLGDAGSPYLIGAISDSLSKYNTTDPSWDFRRLEYSVLLCPFIGVLGGLFFLMTSLYIKEDRKAAELLTSGQTPQPEITTVSESV.

The next 12 membrane-spanning stretches (helical) occupy residues 49-71 (IAVA…IAGV), 87-107 (GLLQ…FGYL), 114-134 (KLIM…SSFV), 148-168 (LVGT…GDLF), 175-195 (LMIS…YIIG), 207-227 (WALR…VFLI), 260-280 (FVWS…LAFW), 309-329 (YIFG…GTCI), 343-363 (LICA…IVLA), 373-393 (FIAI…DILL), 407-427 (LQIM…IGAI), and 451-471 (LLCP…SLYI).

Belongs to the major facilitator superfamily. Spinster (TC 2.A.1.49) family.

It is found in the membrane. In terms of biological role, sphingolipid transporter. The polypeptide is Protein spinster homolog 3 (spns3) (Danio rerio (Zebrafish)).